Reading from the N-terminus, the 470-residue chain is Serine/threonine-protein kinase PEPKR2 (470 aa).

The Protein kinase domain maps to 107–355; it reads YVFGRNIGKG…ADEVLRHPWI (249 aa). ATP is bound by residues 113–121 and lysine 136; that span reads IGKGKFGSV. Aspartate 224 acts as the Proton acceptor in catalysis. Polar residues predominate over residues 377 to 386; sequence GSSTCLQNRS. 2 disordered regions span residues 377 to 419 and 441 to 464; these read GSST…EEED and RSRV…TSTS. Residues 387–403 are compositionally biased toward basic and acidic residues; that stretch reads PTEKTDLNRADREKKIP. Polar residues predominate over residues 445–464; it reads CSPTNNPIEQQHSSNLTSTS.

Belongs to the protein kinase superfamily. Ser/Thr protein kinase family.

The catalysed reaction is L-seryl-[protein] + ATP = O-phospho-L-seryl-[protein] + ADP + H(+). The enzyme catalyses L-threonyl-[protein] + ATP = O-phospho-L-threonyl-[protein] + ADP + H(+). The chain is Serine/threonine-protein kinase PEPKR2 (PEPKR2) from Arabidopsis thaliana (Mouse-ear cress).